The primary structure comprises 398 residues: Protein FAM53A (398 aa).

The segment at 85–253 is disordered; that stretch reads QWQPQSPRPG…TSTPALGGRR (169 aa). Residues 103–115 are compositionally biased toward polar residues; the sequence is VDPSESTGSSTAP. Basic and acidic residues predominate over residues 123–132; the sequence is SLSEPEELVR. At Ser125 the chain carries Phosphoserine. Composition is skewed to low complexity over residues 176–193 and 234–250; these read STGP…ASGG and TPLP…PALG. The Nuclear localization signal signature appears at 268-276; that stretch reads KRSRRKRRR. Ser301 and Ser304 each carry phosphoserine. The disordered stretch occupies residues 336–398; that stretch reads PGCSQRGLRT…ELDLEQIENN (63 aa). Over residues 363 to 375 the composition is skewed to basic and acidic residues; that stretch reads GSRRSSGDPRDGD.

This sequence belongs to the FAM53 family.

It is found in the nucleus. Its function is as follows. May play an important role in neural development; the dorsomedial roof of the third ventricle. This chain is Protein FAM53A, found in Homo sapiens (Human).